A 205-amino-acid chain; its full sequence is MAKIGLIDYGMGNIHSVTKALESLEEEIILIKNNHQIKDCKALILPGVGSFDPAINNLSKTELIIDIKNWIKSGKSFLGICLGLQLLFESSDEGTINGLGIVKGQIKKIPQLSDQRIPHVGWCELLPTRKNSLLKVDELNNWVYFVHSYHAVPSNNNLITANVSYGSEKLTAMIERDNLMACQFHPEKSGKTGEKLLRRWIKSIQ.

The Glutamine amidotransferase type-1 domain maps to 3–205 (KIGLIDYGMG…LLRRWIKSIQ (203 aa)). C81 acts as the Nucleophile in catalysis. Catalysis depends on residues H185 and E187.

In terms of assembly, heterodimer of HisH and HisF.

Its subcellular location is the cytoplasm. The catalysed reaction is 5-[(5-phospho-1-deoxy-D-ribulos-1-ylimino)methylamino]-1-(5-phospho-beta-D-ribosyl)imidazole-4-carboxamide + L-glutamine = D-erythro-1-(imidazol-4-yl)glycerol 3-phosphate + 5-amino-1-(5-phospho-beta-D-ribosyl)imidazole-4-carboxamide + L-glutamate + H(+). It catalyses the reaction L-glutamine + H2O = L-glutamate + NH4(+). Its pathway is amino-acid biosynthesis; L-histidine biosynthesis; L-histidine from 5-phospho-alpha-D-ribose 1-diphosphate: step 5/9. Its function is as follows. IGPS catalyzes the conversion of PRFAR and glutamine to IGP, AICAR and glutamate. The HisH subunit catalyzes the hydrolysis of glutamine to glutamate and ammonia as part of the synthesis of IGP and AICAR. The resulting ammonia molecule is channeled to the active site of HisF. This chain is Imidazole glycerol phosphate synthase subunit HisH, found in Prochlorococcus marinus subsp. pastoris (strain CCMP1986 / NIES-2087 / MED4).